The chain runs to 555 residues: 2-succinyl-5-enolpyruvyl-6-hydroxy-3-cyclohexene-1-carboxylate synthase (555 aa).

This sequence belongs to the TPP enzyme family. MenD subfamily. Homodimer. It depends on Mg(2+) as a cofactor. Requires Mn(2+) as cofactor. Thiamine diphosphate serves as cofactor.

The enzyme catalyses isochorismate + 2-oxoglutarate + H(+) = 5-enolpyruvoyl-6-hydroxy-2-succinyl-cyclohex-3-ene-1-carboxylate + CO2. It functions in the pathway quinol/quinone metabolism; 1,4-dihydroxy-2-naphthoate biosynthesis; 1,4-dihydroxy-2-naphthoate from chorismate: step 2/7. The protein operates within quinol/quinone metabolism; menaquinone biosynthesis. Its function is as follows. Catalyzes the thiamine diphosphate-dependent decarboxylation of 2-oxoglutarate and the subsequent addition of the resulting succinic semialdehyde-thiamine pyrophosphate anion to isochorismate to yield 2-succinyl-5-enolpyruvyl-6-hydroxy-3-cyclohexene-1-carboxylate (SEPHCHC). In Bacteroides fragilis (strain ATCC 25285 / DSM 2151 / CCUG 4856 / JCM 11019 / LMG 10263 / NCTC 9343 / Onslow / VPI 2553 / EN-2), this protein is 2-succinyl-5-enolpyruvyl-6-hydroxy-3-cyclohexene-1-carboxylate synthase.